Here is a 340-residue protein sequence, read N- to C-terminus: Lipoate--protein ligase 2 (340 aa).

Positions 31–222 (FLDEDILFPY…QILGIDDIKE (192 aa)) constitute a BPL/LPL catalytic domain. ATP is bound by residues Arg73, 78–81 (GAVY), Lys136, and Ala140. Lys136 serves as a coordination point for (R)-lipoate. Residues 293–321 (QGDIKDVEEALQGTKMTREDLMHQLKQLD) adopt a coiled-coil conformation.

This sequence belongs to the LplA family.

It catalyses the reaction L-lysyl-[lipoyl-carrier protein] + (R)-lipoate + ATP = N(6)-[(R)-lipoyl]-L-lysyl-[lipoyl-carrier protein] + AMP + diphosphate + H(+). Its pathway is protein modification; protein lipoylation via exogenous pathway; protein N(6)-(lipoyl)lysine from lipoate: step 1/2. It functions in the pathway protein modification; protein lipoylation via exogenous pathway; protein N(6)-(lipoyl)lysine from lipoate: step 2/2. Catalyzes specifically the lipoylation of GcvH-L (SAV0324), likely via the ATP-dependent activation of lipoate to lipoyl-AMP and the transfer of the activated lipoyl onto the lipoyl domain of the target protein. Can also utilize lipoamide as substrate for GcvH-L modification. This Staphylococcus aureus (strain Mu50 / ATCC 700699) protein is Lipoate--protein ligase 2.